A 612-amino-acid chain; its full sequence is Cyclin-dependent kinase G1 (612 aa).

Positions serine 26–asparagine 54 are enriched in basic and acidic residues. Disordered stretches follow at residues serine 26–serine 60 and cysteine 239–aspartate 278. The 297-residue stretch at phenylalanine 297–phenylalanine 593 folds into the Protein kinase domain. ATP is bound by residues isoleucine 303–valine 311 and lysine 326. A Phosphotyrosine modification is found at tyrosine 308. The Proton acceptor role is filled by aspartate 426. Residue serine 453 is modified to Phosphoserine. Threonine 459 is modified (phosphothreonine).

Belongs to the protein kinase superfamily. Ser/Thr protein kinase family. As to quaternary structure, forms a complex with CYCL1-1. Associated with the spliceosome. Interacts with RS2Z33. In terms of tissue distribution, expressed in leaves and inflorescences. Lower levels of expression in roots and stems.

It localises to the nucleus speckle. The catalysed reaction is L-seryl-[protein] + ATP = O-phospho-L-seryl-[protein] + ADP + H(+). The enzyme catalyses L-threonyl-[protein] + ATP = O-phospho-L-threonyl-[protein] + ADP + H(+). Functionally, cyclin-dependent kinase involved in pre-mRNA splicing. Required for the correct splicing of the sixth intron of CALS5 pre-mRNA. May stabilize the binding of U1 snRNP to this rare type of intron with a GC 5'SS. Involved in chromosome pairing and is required for the completion of synapsis in male meiocytes at high ambient temperatures. This is Cyclin-dependent kinase G1 (CDKG1) from Arabidopsis thaliana (Mouse-ear cress).